We begin with the raw amino-acid sequence, 462 residues long: MQEGKISQIIGPVVDVDFPEGQLPSILDALTITRPDGTKLVLETQQHLGEERVRTVAMESTDGLIRGLSVTNTERPIQVPVGPEVLGRMLNVVGDPIDGRGSVHTSKTYSIHRSAPKFDELSTKTEMFETGIKVIDLLEPYSRGGKTGLFGGAGVGKTVLIMELINNIAKQQSGYSVFAGVGERTREGNDLWHEMMESGVIDKTALVFGQMNEPPGARARVALTGLSIAEYFRDEENRDVLLFIDNIFRFTQAGSEVSALLGRMPSAVGYQPTLATEMGELQDRIVSTKKGSVTSVQAIYVPADDLTDPAPATAFAHLDATTVLSRSIAELGIYPAVDPLDSTSRILDPNIVGDDHYDTAQAVKQILQRYKDLQDIIAILGMDELSDEDKLVVSRARKVQRFLSQPFFVAEAFTGLAGKYVKLDETIKGFKEIIAGKHDNLPESAFYLVGTIEEAVQKAKTL.

An ATP-binding site is contributed by 151–158 (GGAGVGKT).

The protein belongs to the ATPase alpha/beta chains family. In terms of assembly, F-type ATPases have 2 components, CF(1) - the catalytic core - and CF(0) - the membrane proton channel. CF(1) has five subunits: alpha(3), beta(3), gamma(1), delta(1), epsilon(1). CF(0) has four main subunits: a(1), b(1), b'(1) and c(9-12).

Its subcellular location is the cell inner membrane. It carries out the reaction ATP + H2O + 4 H(+)(in) = ADP + phosphate + 5 H(+)(out). In terms of biological role, produces ATP from ADP in the presence of a proton gradient across the membrane. The catalytic sites are hosted primarily by the beta subunits. The protein is ATP synthase subunit beta of Chlorobium phaeobacteroides (strain DSM 266 / SMG 266 / 2430).